A 345-amino-acid polypeptide reads, in one-letter code: Nicotinate-nucleotide--dimethylbenzimidazole phosphoribosyltransferase (345 aa).

Glu312 serves as the catalytic Proton acceptor.

It belongs to the CobT family.

The catalysed reaction is 5,6-dimethylbenzimidazole + nicotinate beta-D-ribonucleotide = alpha-ribazole 5'-phosphate + nicotinate + H(+). It participates in nucleoside biosynthesis; alpha-ribazole biosynthesis; alpha-ribazole from 5,6-dimethylbenzimidazole: step 1/2. Catalyzes the synthesis of alpha-ribazole-5'-phosphate from nicotinate mononucleotide (NAMN) and 5,6-dimethylbenzimidazole (DMB). This chain is Nicotinate-nucleotide--dimethylbenzimidazole phosphoribosyltransferase, found in Bacteroides fragilis (strain YCH46).